Reading from the N-terminus, the 381-residue chain is Phthiodiolone/phenolphthiodiolone dimycocerosates ketoreductase (381 aa).

Belongs to the mer family. Phthiodiolone/phenolphthiodiolone dimycocerosates ketoreductase subfamily.

In terms of biological role, catalyzes the reduction of the keto moiety of phthiodiolone dimycocerosates (DIM B) and glycosylated phenolphthiodiolone dimycocerosates to form the intermediate compounds phthiotriol and glycosylated phenolphthiotriol dimycocerosates during phthiocerol dimycocerosates (DIM A) and glycosylated phenolphthiocerol dimycocerosates (PGL) biosynthesis. The protein is Phthiodiolone/phenolphthiodiolone dimycocerosates ketoreductase of Mycobacterium tuberculosis (strain CDC 1551 / Oshkosh).